A 298-amino-acid chain; its full sequence is 4-hydroxy-tetrahydrodipicolinate synthase (298 aa).

Residue Thr51 coordinates pyruvate. The active-site Proton donor/acceptor is the Tyr139. Catalysis depends on Lys167, which acts as the Schiff-base intermediate with substrate. Position 209 (Ile209) interacts with pyruvate.

This sequence belongs to the DapA family. Homotetramer; dimer of dimers.

The protein resides in the cytoplasm. It catalyses the reaction L-aspartate 4-semialdehyde + pyruvate = (2S,4S)-4-hydroxy-2,3,4,5-tetrahydrodipicolinate + H2O + H(+). It participates in amino-acid biosynthesis; L-lysine biosynthesis via DAP pathway; (S)-tetrahydrodipicolinate from L-aspartate: step 3/4. Functionally, catalyzes the condensation of (S)-aspartate-beta-semialdehyde [(S)-ASA] and pyruvate to 4-hydroxy-tetrahydrodipicolinate (HTPA). This chain is 4-hydroxy-tetrahydrodipicolinate synthase, found in Pasteurella multocida (strain Pm70).